The following is a 105-amino-acid chain: Heat shock protein HspQ (105 aa).

The interval 74–105 is disordered; that stretch reads SSETQDEHPEQPSMDELARTIRKQLQAPRLRN.

Belongs to the HspQ family.

The protein localises to the cytoplasm. Its function is as follows. Involved in the degradation of certain denaturated proteins, including DnaA, during heat shock stress. This chain is Heat shock protein HspQ, found in Citrobacter koseri (strain ATCC BAA-895 / CDC 4225-83 / SGSC4696).